The following is a 61-amino-acid chain: Small ribosomal subunit protein uS14 (61 aa).

Zn(2+)-binding residues include C24, C27, C40, and C43.

Belongs to the universal ribosomal protein uS14 family. Zinc-binding uS14 subfamily. In terms of assembly, part of the 30S ribosomal subunit. Contacts proteins S3 and S10. The cofactor is Zn(2+).

Binds 16S rRNA, required for the assembly of 30S particles and may also be responsible for determining the conformation of the 16S rRNA at the A site. The sequence is that of Small ribosomal subunit protein uS14 from Treponema pallidum (strain Nichols).